Here is a 176-residue protein sequence, read N- to C-terminus: Ribosome maturation factor RimM (176 aa).

Positions 97–176 (GDEFYWRELV…TIQVDWDPSF (80 aa)) constitute a PRC barrel domain.

The protein belongs to the RimM family. Binds ribosomal protein uS19.

It is found in the cytoplasm. An accessory protein needed during the final step in the assembly of 30S ribosomal subunit, possibly for assembly of the head region. Essential for efficient processing of 16S rRNA. May be needed both before and after RbfA during the maturation of 16S rRNA. It has affinity for free ribosomal 30S subunits but not for 70S ribosomes. The chain is Ribosome maturation factor RimM from Pseudoalteromonas atlantica (strain T6c / ATCC BAA-1087).